Reading from the N-terminus, the 217-residue chain is 3,4-dihydroxy-2-butanone 4-phosphate synthase (217 aa).

D-ribulose 5-phosphate is bound by residues 37–38 (RE), D42, 150–154 (RRGHT), and E174. E38 is a binding site for Mg(2+). H153 provides a ligand contact to Mg(2+).

This sequence belongs to the DHBP synthase family. Homodimer. Requires Mg(2+) as cofactor. The cofactor is Mn(2+).

It carries out the reaction D-ribulose 5-phosphate = (2S)-2-hydroxy-3-oxobutyl phosphate + formate + H(+). Its pathway is cofactor biosynthesis; riboflavin biosynthesis; 2-hydroxy-3-oxobutyl phosphate from D-ribulose 5-phosphate: step 1/1. Its function is as follows. Catalyzes the conversion of D-ribulose 5-phosphate to formate and 3,4-dihydroxy-2-butanone 4-phosphate. In Shewanella putrefaciens (strain CN-32 / ATCC BAA-453), this protein is 3,4-dihydroxy-2-butanone 4-phosphate synthase.